The sequence spans 340 residues: uncharacterized protein (340 aa).

This is an uncharacterized protein from Archaeoglobus fulgidus (strain ATCC 49558 / DSM 4304 / JCM 9628 / NBRC 100126 / VC-16).